The following is a 279-amino-acid chain: Proteasome subunit beta (279 aa).

The propeptide at 1-53 (MSGTAEFPGRIPAPYLEVGSSSFVELLGSVAPELLPGRRPLPPGDMGDAAPHG) is removed in mature form; by autocatalysis. T54 functions as the Nucleophile in the catalytic mechanism.

The protein belongs to the peptidase T1B family. In terms of assembly, the 20S proteasome core is composed of 14 alpha and 14 beta subunits that assemble into four stacked heptameric rings, resulting in a barrel-shaped structure. The two inner rings, each composed of seven catalytic beta subunits, are sandwiched by two outer rings, each composed of seven alpha subunits. The catalytic chamber with the active sites is on the inside of the barrel. Has a gated structure, the ends of the cylinder being occluded by the N-termini of the alpha-subunits. Is capped by the proteasome-associated ATPase, ARC.

It localises to the cytoplasm. It catalyses the reaction Cleavage of peptide bonds with very broad specificity.. Its pathway is protein degradation; proteasomal Pup-dependent pathway. Its activity is regulated as follows. The formation of the proteasomal ATPase ARC-20S proteasome complex, likely via the docking of the C-termini of ARC into the intersubunit pockets in the alpha-rings, may trigger opening of the gate for substrate entry. Interconversion between the open-gate and close-gate conformations leads to a dynamic regulation of the 20S proteasome proteolysis activity. Component of the proteasome core, a large protease complex with broad specificity involved in protein degradation. This Stackebrandtia nassauensis (strain DSM 44728 / CIP 108903 / NRRL B-16338 / NBRC 102104 / LLR-40K-21) protein is Proteasome subunit beta.